Reading from the N-terminus, the 557-residue chain is Formate--tetrahydrofolate ligase (557 aa).

67-74 provides a ligand contact to ATP; the sequence is TPAGEGKT.

The protein belongs to the formate--tetrahydrofolate ligase family.

It catalyses the reaction (6S)-5,6,7,8-tetrahydrofolate + formate + ATP = (6R)-10-formyltetrahydrofolate + ADP + phosphate. The protein operates within one-carbon metabolism; tetrahydrofolate interconversion. The sequence is that of Formate--tetrahydrofolate ligase from Cereibacter sphaeroides (strain KD131 / KCTC 12085) (Rhodobacter sphaeroides).